We begin with the raw amino-acid sequence, 285 residues long: Transmembrane protein 53-A (285 aa).

The chain crosses the membrane as a helical span at residues 165 to 185 (FLALAAFAILVIILRILLYPL).

This sequence belongs to the TMEM53 family.

The protein resides in the nucleus outer membrane. Its function is as follows. Ensures normal bone formation, through the negative regulation of bone morphogenetic protein (BMP) signaling in osteoblast lineage cells by blocking cytoplasm-nucleus translocation of phosphorylated SMAD proteins. The sequence is that of Transmembrane protein 53-A (tmem53-a) from Xenopus laevis (African clawed frog).